A 225-amino-acid polypeptide reads, in one-letter code: MGFGDLKSPAGLQVLNDYLADKSYIEGYVPSQADVAVFEAVSGPPPADLCHALRWYNHIKSYEKEKASLPGVKKALGKYGPANVEDTTESGATDSKDDDDIDLFGSDDEEESEEAKRLREERLAQYESKKAKKPALVAKSSILLDVKPWDDETDMAKLEECVRSIQADGLVWGSSKLVPVGYGIKKLQIQCVVEDDKVGTDMLEEQITAFEDYVQSMDVAAFNKI.

Positions 1-90 constitute a GST C-terminal domain; the sequence is MGFGDLKSPA…PANVEDTTES (90 aa). Lys-7 carries the N6-acetyllysine modification. Residues Ser-8 and Ser-42 each carry the phosphoserine modification. The disordered stretch occupies residues 79–98; sequence YGPANVEDTTESGATDSKDD. Phosphothreonine occurs at positions 88 and 93. Ser-95 and Ser-106 each carry phosphoserine. Residue Lys-147 forms a Glycyl lysine isopeptide (Lys-Gly) (interchain with G-Cter in SUMO2) linkage. Phosphoserine is present on Ser-174.

The protein belongs to the EF-1-beta/EF-1-delta family. In terms of assembly, EF-1 is composed of 4 subunits: alpha, beta (alpha subunit of the eEF1B subcomplex), delta (beta subunit of the eEF1B subcomplex), and gamma (gamma subunit of the eEF1B subcomplex). Interacts with elongation factor EEF1A1.

In terms of biological role, catalytic subunit of the guanine nucleotide exchange factor (GEF) (eEF1B subcomplex) of the eukaryotic elongation factor 1 complex (eEF1). Stimulates the exchange of GDP for GTP on elongation factor 1A (eEF1A), probably by displacing GDP from the nucleotide binding pocket in eEF1A. In Sus scrofa (Pig), this protein is Elongation factor 1-beta (EEF1B).